Here is a 322-residue protein sequence, read N- to C-terminus: tRNA-dihydrouridine synthase B (322 aa).

FMN is bound by residues 16 to 18 and glutamine 70; that span reads PMA. Cysteine 100 functions as the Proton donor in the catalytic mechanism. FMN is bound by residues lysine 139, 200–202, and 224–225; these read NGD and GR.

This sequence belongs to the Dus family. DusB subfamily. FMN is required as a cofactor.

It carries out the reaction a 5,6-dihydrouridine in tRNA + NAD(+) = a uridine in tRNA + NADH + H(+). It catalyses the reaction a 5,6-dihydrouridine in tRNA + NADP(+) = a uridine in tRNA + NADPH + H(+). Functionally, catalyzes the synthesis of 5,6-dihydrouridine (D), a modified base found in the D-loop of most tRNAs, via the reduction of the C5-C6 double bond in target uridines. The sequence is that of tRNA-dihydrouridine synthase B from Vibrio vulnificus (strain CMCP6).